Reading from the N-terminus, the 308-residue chain is Glutathione synthetase (308 aa).

Positions lysine 120–leucine 304 constitute an ATP-grasp domain. Alanine 146–glycine 202 serves as a coordination point for ATP. Glutamate 275 and asparagine 277 together coordinate Mg(2+).

It belongs to the prokaryotic GSH synthase family. Requires Mg(2+) as cofactor. Mn(2+) is required as a cofactor.

The catalysed reaction is gamma-L-glutamyl-L-cysteine + glycine + ATP = glutathione + ADP + phosphate + H(+). It functions in the pathway sulfur metabolism; glutathione biosynthesis; glutathione from L-cysteine and L-glutamate: step 2/2. This Prochlorococcus marinus (strain MIT 9313) protein is Glutathione synthetase.